We begin with the raw amino-acid sequence, 504 residues long: Deoxyguanosinetriphosphate triphosphohydrolase (504 aa).

Residues 66 to 273 (RLTHSMEVQQ…MEAADDISYC (208 aa)) enclose the HD domain.

It belongs to the dGTPase family. Type 1 subfamily. In terms of assembly, homotetramer. The cofactor is Mg(2+).

The catalysed reaction is dGTP + H2O = 2'-deoxyguanosine + triphosphate + H(+). In terms of biological role, dGTPase preferentially hydrolyzes dGTP over the other canonical NTPs. This is Deoxyguanosinetriphosphate triphosphohydrolase from Citrobacter koseri (strain ATCC BAA-895 / CDC 4225-83 / SGSC4696).